Reading from the N-terminus, the 82-residue chain is uncharacterized protein (82 aa).

The segment at 22-82 is disordered; that stretch reads LRRSRSSRNG…WPPPCAFTPG (61 aa). Positions 47 to 58 are enriched in basic and acidic residues; that stretch reads HRGEPGHPRMEE. Pro residues predominate over residues 73–82; that stretch reads WPPPCAFTPG.

This is an uncharacterized protein from Homo sapiens (Human).